A 148-amino-acid polypeptide reads, in one-letter code: Protein TIFY 5B (148 aa).

In terms of domain architecture, Tify spans 54-89 (PKQESQILTIFYNGHMCVSSDLTHLEANAILSLASR).

This sequence belongs to the TIFY/JAZ family. Ubiquitinated. Targeted for degradation by the SCF(COI1) E3 ubiquitin ligase-proteasome pathway during jasmonate signaling.

The protein resides in the nucleus. Functionally, repressor of jasmonate responses. This chain is Protein TIFY 5B (TIFY 5B), found in Arabidopsis thaliana (Mouse-ear cress).